We begin with the raw amino-acid sequence, 1043 residues long: Integrator complex subunit 3 (1043 aa).

The residue at position 1 (Met1) is an N-acetylmethionine. 3 positions are modified to phosphoserine: Ser502, Ser537, and Ser995. The interval 977-1043 is disordered; sequence YEDSSTKPPK…GSSAVGSDSD (67 aa). The segment covering 1008-1022 has biased composition (acidic residues); it reads AEEESGSSSASEEED.

It belongs to the Integrator subunit 3 family. In terms of assembly, component of the Integrator complex, composed of core subunits INTS1, INTS2, INTS3, INTS4, INTS5, INTS6, INTS7, INTS8, INTS9/RC74, INTS10, INTS11/CPSF3L, INTS12, INTS13, INTS14 and INTS15. The core complex associates with protein phosphatase 2A subunits PPP2CA and PPP2R1A, to form the Integrator-PP2A (INTAC) complex. Component of the SOSS complex, composed of SOSS-B (SOSS-B1/NABP2 or SOSS-B2/NABP1), SOSS-A/INTS3 and SOSS-C/INIP. SOSS complexes containing SOSS-B1/NABP2 are more abundant than complexes containing SOSS-B2/NABP1. Interacts with SOSS-B1/NABP2, SOSS-B2/NABP1 and SOSS-C/INIP; the interaction is direct. Interacts with NBN/NBS1.

It localises to the nucleus. It is found in the cytoplasm. In terms of biological role, component of the integrator complex, a multiprotein complex that terminates RNA polymerase II (Pol II) transcription in the promoter-proximal region of genes. The integrator complex provides a quality checkpoint during transcription elongation by driving premature transcription termination of transcripts that are unfavorably configured for transcriptional elongation: the complex terminates transcription by (1) catalyzing dephosphorylation of the C-terminal domain (CTD) of Pol II subunit POLR2A/RPB1 and SUPT5H/SPT5, (2) degrading the exiting nascent RNA transcript via endonuclease activity and (3) promoting the release of Pol II from bound DNA. The integrator complex is also involved in terminating the synthesis of non-coding Pol II transcripts, such as enhancer RNAs (eRNAs), small nuclear RNAs (snRNAs), telomerase RNAs and long non-coding RNAs (lncRNAs). Within the integrator complex, INTS3 is involved in the post-termination step: INTS3 binds INTS7 in the open conformation of integrator complex and prevents the rebinding of Pol II to the integrator after termination cycle. Mediates recruitment of cytoplasmic dynein to the nuclear envelope, probably as component of the integrator complex. Component of the SOSS complex, a multiprotein complex that functions downstream of the MRN complex to promote DNA repair and G2/M checkpoint. The SOSS complex associates with single-stranded DNA at DNA lesions and influences diverse endpoints in the cellular DNA damage response including cell-cycle checkpoint activation, recombinational repair and maintenance of genomic stability. The SOSS complex is required for efficient homologous recombination-dependent repair of double-strand breaks (DSBs) and ATM-dependent signaling pathways. In the SOSS complex, it is required for the assembly of the complex and for stabilization of the complex at DNA damage sites. The chain is Integrator complex subunit 3 (INTS3) from Pongo abelii (Sumatran orangutan).